The primary structure comprises 359 residues: tRNA N6-adenosine threonylcarbamoyltransferase (359 aa).

Positions 115 and 119 each coordinate Fe cation. Residues 137 to 141 (LVSGG), D170, G183, and N283 each bind substrate. Position 311 (D311) interacts with Fe cation. Positions 328 to 359 (APDSLDIAPRSRWPLDEKSAPVFGTGRRGAKA) are disordered.

It belongs to the KAE1 / TsaD family. Requires Fe(2+) as cofactor.

Its subcellular location is the cytoplasm. It carries out the reaction L-threonylcarbamoyladenylate + adenosine(37) in tRNA = N(6)-L-threonylcarbamoyladenosine(37) in tRNA + AMP + H(+). Required for the formation of a threonylcarbamoyl group on adenosine at position 37 (t(6)A37) in tRNAs that read codons beginning with adenine. Is involved in the transfer of the threonylcarbamoyl moiety of threonylcarbamoyl-AMP (TC-AMP) to the N6 group of A37, together with TsaE and TsaB. TsaD likely plays a direct catalytic role in this reaction. The sequence is that of tRNA N6-adenosine threonylcarbamoyltransferase from Brucella suis (strain ATCC 23445 / NCTC 10510).